The sequence spans 508 residues: Aspartic proteinase yapsin-3 (508 aa).

An N-terminal signal peptide occupies residues 1–20 (MKLQLAAVATLAVLTSPAFG). Positions 21-47 (RVLPDGKYVKIPFTKKKNGDNGELSKR) are excised as a propeptide. Residues 63-394 (YSVELAIGTP…DLDNYEISLA (332 aa)) form the Peptidase A1 domain. A glycan (N-linked (GlcNAc...) asparagine) is linked at asparagine 75. The active site involves aspartate 81. Asparagine 120, asparagine 160, asparagine 163, and asparagine 275 each carry an N-linked (GlcNAc...) asparagine glycan. Residue aspartate 288 is part of the active site. N-linked (GlcNAc...) asparagine glycans are attached at residues asparagine 309, asparagine 328, asparagine 367, asparagine 422, asparagine 445, and asparagine 462. The segment covering 448-468 (STATTTRSTTTKKTNSTTTAK) has biased composition (low complexity). The segment at 448–476 (STATTTRSTTTKKTNSTTTAKSTHKSKRA) is disordered. Asparagine 483 is lipidated: GPI-anchor amidated asparagine. Residues 484 to 508 (SASSIRSTLGLLLVPSLLILSVFFS) constitute a propeptide, removed in mature form.

Belongs to the peptidase A1 family. Post-translationally, can also be processed to start at Phe-54.

It is found in the cell membrane. Its function is as follows. Cleaves proteins C-terminally to mono- and paired-basic residues. Required for cell wall integrity. The polypeptide is Aspartic proteinase yapsin-3 (YPS3) (Saccharomyces cerevisiae (strain ATCC 204508 / S288c) (Baker's yeast)).